The chain runs to 383 residues: Succinate--CoA ligase [ADP-forming] subunit beta (383 aa).

Residues 9–241 (KEVLHKFNVS…YDEEVKEEIE (233 aa)) enclose the ATP-grasp domain. ATP is bound by residues lysine 46, 53–55 (GRG), glutamate 99, serine 102, and glutamate 107. Mg(2+) is bound by residues asparagine 196 and aspartate 210. Substrate-binding positions include asparagine 261 and 318 to 320 (GIM).

Belongs to the succinate/malate CoA ligase beta subunit family. In terms of assembly, heterotetramer of two alpha and two beta subunits. Requires Mg(2+) as cofactor.

The catalysed reaction is succinate + ATP + CoA = succinyl-CoA + ADP + phosphate. It catalyses the reaction GTP + succinate + CoA = succinyl-CoA + GDP + phosphate. It functions in the pathway carbohydrate metabolism; tricarboxylic acid cycle; succinate from succinyl-CoA (ligase route): step 1/1. Functionally, succinyl-CoA synthetase functions in the citric acid cycle (TCA), coupling the hydrolysis of succinyl-CoA to the synthesis of either ATP or GTP and thus represents the only step of substrate-level phosphorylation in the TCA. The beta subunit provides nucleotide specificity of the enzyme and binds the substrate succinate, while the binding sites for coenzyme A and phosphate are found in the alpha subunit. In Wolbachia sp. subsp. Drosophila simulans (strain wRi), this protein is Succinate--CoA ligase [ADP-forming] subunit beta.